The primary structure comprises 574 residues: 5'-nucleotidase (574 aa).

The signal sequence occupies residues 1–26 (MNPGAARTPALRILALGALLWPAARP). The Zn(2+) site is built by Asp36 and His38. Cys51 and Cys57 are oxidised to a cystine. The N-linked (GlcNAc...) asparagine glycan is linked to Asn53. Positions 85, 117, 220, and 243 each coordinate Zn(2+). Asn311 and Asn333 each carry an N-linked (GlcNAc...) asparagine glycan. 2 cysteine pairs are disulfide-bonded: Cys353–Cys358 and Cys365–Cys387. Position 354 (Arg354) interacts with AMP. Arg354 is an IMP binding site. 2 residues coordinate AMP: Asn390 and Arg395. IMP-binding residues include Asn390 and Arg395. The N-linked (GlcNAc...) asparagine glycan is linked to Asn403. Phe417 serves as a coordination point for AMP. Phe417 lines the IMP pocket. Residues Cys476 and Cys479 are joined by a disulfide bond. AMP-binding residues include Phe500 and Asp506. Positions 500 and 506 each coordinate IMP. Ser549 carries the GPI-anchor amidated serine lipid modification. The propeptide at 550-574 (AGSHCCGSFSLIFLSVLAVIIILYQ) is removed in mature form.

It belongs to the 5'-nucleotidase family. As to quaternary structure, homodimer. Zn(2+) serves as cofactor.

It is found in the cell membrane. The catalysed reaction is a ribonucleoside 5'-phosphate + H2O = a ribonucleoside + phosphate. It carries out the reaction a 2'-deoxyribonucleoside 5'-phosphate + H2O = a 2'-deoxyribonucleoside + phosphate. It catalyses the reaction dTMP + H2O = thymidine + phosphate. The enzyme catalyses CMP + H2O = cytidine + phosphate. The catalysed reaction is IMP + H2O = inosine + phosphate. It carries out the reaction AMP + H2O = adenosine + phosphate. It catalyses the reaction GMP + H2O = guanosine + phosphate. The enzyme catalyses UMP + H2O = uridine + phosphate. The catalysed reaction is dAMP + H2O = 2'-deoxyadenosine + phosphate. It carries out the reaction dCMP + H2O = 2'-deoxycytidine + phosphate. In terms of biological role, catalyzes the hydrolysis of nucleotide monophosphates, releasing inorganic phosphate and the corresponding nucleoside, with AMP being the preferred substrate. Shows a preference for ribonucleotide monophosphates over their equivalent deoxyribose forms. Other substrates include IMP, UMP, GMP, CMP, dAMP, dCMP, dTMP, NAD and NMN. The chain is 5'-nucleotidase (NT5E) from Bos taurus (Bovine).